The chain runs to 433 residues: MADSLELVIDTIMAREVLDSRGNPTVEAEVLLEGGAIGRSIVPSGASTGAHEAHELRDGGKRYLGKGVLQAVNHIEENIAPALCGLSSLDQATVDSVMKQLDDTDNKSNLGANSILAVSMATARAAANGLGLPLYRYLGGPMSSLLPVPLMNVINGGEHAANNLDFQEFMLVPHGAESFREALRMGAEVFHTLKDLLSQKGLSTAVGDEGGFAPNLESNKAAGDLLMQAIEQAGFKPGEQVSLALDVASTEFYAEGQYCYGGNSYSSEQMVEELAGLVNAFPIVSIEDGLAEDDWDGWRLLTKKLGKNVQLVGDDLFVTNTLRLQRGIDENIANSILIKVNQIGSLTETLEAIELASRSSYTTVISHRSGETEDTTIADLSVATKSGQIKTGSLSRSERVAKYNQLLRIEDELGSQATYAGLVGLGPRGSLKG.

Gln167 is a (2R)-2-phosphoglycerate binding site. Glu209 (proton donor) is an active-site residue. Positions 246, 287, and 314 each coordinate Mg(2+). Residues Lys339, Arg368, Ser369, and Lys390 each contribute to the (2R)-2-phosphoglycerate site. Lys339 serves as the catalytic Proton acceptor.

The protein belongs to the enolase family. Mg(2+) is required as a cofactor.

The protein resides in the cytoplasm. Its subcellular location is the secreted. It localises to the cell surface. It catalyses the reaction (2R)-2-phosphoglycerate = phosphoenolpyruvate + H2O. It participates in carbohydrate degradation; glycolysis; pyruvate from D-glyceraldehyde 3-phosphate: step 4/5. In terms of biological role, catalyzes the reversible conversion of 2-phosphoglycerate (2-PG) into phosphoenolpyruvate (PEP). It is essential for the degradation of carbohydrates via glycolysis. In Prochlorococcus marinus (strain NATL2A), this protein is Enolase.